Here is a 173-residue protein sequence, read N- to C-terminus: Ribosome maturation factor RimM (173 aa).

The PRC barrel domain occupies 98–171; that stretch reads DDQYYYDEII…LITIDALEGL (74 aa).

This sequence belongs to the RimM family. In terms of assembly, binds ribosomal protein uS19.

Its subcellular location is the cytoplasm. Functionally, an accessory protein needed during the final step in the assembly of 30S ribosomal subunit, possibly for assembly of the head region. Essential for efficient processing of 16S rRNA. May be needed both before and after RbfA during the maturation of 16S rRNA. It has affinity for free ribosomal 30S subunits but not for 70S ribosomes. This Leuconostoc mesenteroides subsp. mesenteroides (strain ATCC 8293 / DSM 20343 / BCRC 11652 / CCM 1803 / JCM 6124 / NCDO 523 / NBRC 100496 / NCIMB 8023 / NCTC 12954 / NRRL B-1118 / 37Y) protein is Ribosome maturation factor RimM.